A 169-amino-acid chain; its full sequence is Crossover junction endodeoxyribonuclease RuvC (169 aa).

Active-site residues include Asp-11, Glu-71, and Asp-143. The Mg(2+) site is built by Asp-11, Glu-71, and Asp-143.

The protein belongs to the RuvC family. Homodimer which binds Holliday junction (HJ) DNA. The HJ becomes 2-fold symmetrical on binding to RuvC with unstacked arms; it has a different conformation from HJ DNA in complex with RuvA. In the full resolvosome a probable DNA-RuvA(4)-RuvB(12)-RuvC(2) complex forms which resolves the HJ. The cofactor is Mg(2+).

The protein localises to the cytoplasm. The catalysed reaction is Endonucleolytic cleavage at a junction such as a reciprocal single-stranded crossover between two homologous DNA duplexes (Holliday junction).. In terms of biological role, the RuvA-RuvB-RuvC complex processes Holliday junction (HJ) DNA during genetic recombination and DNA repair. Endonuclease that resolves HJ intermediates. Cleaves cruciform DNA by making single-stranded nicks across the HJ at symmetrical positions within the homologous arms, yielding a 5'-phosphate and a 3'-hydroxyl group; requires a central core of homology in the junction. The consensus cleavage sequence is 5'-(A/T)TT(C/G)-3'. Cleavage occurs on the 3'-side of the TT dinucleotide at the point of strand exchange. HJ branch migration catalyzed by RuvA-RuvB allows RuvC to scan DNA until it finds its consensus sequence, where it cleaves and resolves the cruciform DNA. This Allorhizobium ampelinum (strain ATCC BAA-846 / DSM 112012 / S4) (Agrobacterium vitis (strain S4)) protein is Crossover junction endodeoxyribonuclease RuvC.